The chain runs to 1863 residues: Calcineurin-binding protein 1 (1863 aa).

TPR repeat units follow at residues 30–65, 81–116, and 118–150; these read LSQTYHDGLLKLQAKDYDKARELLESILKDPIITNS, FLALKNLATVFLELGSSHYENALNCYLQAIDLDAKD, and VLWNHLGTLSCSMGLLSISRWAFEQGLLCSPNN. The disordered stretch occupies residues 315–361; sequence ERESGGSVKEKEPVFSEEHPQERRSTRLERLRNQKPEKEGLEFDNSK. TPR repeat units lie at residues 543–576, 602–637, 866–900, 955–988, 990–1009, 1011–1031, 1143–1183, 1226–1263, 1264–1297, 1306–1339, 1377–1412, and 1508–1541; these read ARYFWLSARLSILEDNKAKALEEYLRCLSLLGRE, IHEINLLKIDFLLENNIPEMMEKEFYSECVNLLAPL, INSPDGLGHDMGLPDKLCRNEVKSFLEEVHVEKNE, QCFFCLYGLNLRVDGSYEDELAVHKNTSRGDYQT, EQCVDVFQYILPYAKASSRT, LVKLRRVLRAIKKHFSQPPDD, FESW…SQRV, VPFYDQRSVLPSKDATWTRFCENSMKHFNKAFSHRQDW, SHAFYMGKLSEKLGHSYEISLSYYKQAMTLNPSA, ASRLKLLNACGKQNLEALKVLASYCFDESIKDTA, EGVWHMLYNDSLSALGICVEGDLKHFHKARYMLAQG, and NSLRSDKRFSLCVEDLVPVAIGRYVKALVSSMSR. Residues 894–923 show a composition bias toward basic and acidic residues; sequence VHVEKNENNKTESKKDGSEEQVGYREKEQS. The tract at residues 894-941 is disordered; the sequence is VHVEKNENNKTESKKDGSEEQVGYREKEQSEQQSKQIPEHTEEVAEEE. The segment at 1813–1840 is disordered; the sequence is KMKRGASTSSVVPSVQSGGTSEPEPAPK. Polar residues predominate over residues 1818–1832; sequence ASTSSVVPSVQSGGT.

Component of the HIRA complex made of UBN1, UBN2, ASF1A, CABIN1 and HIRA. As to expression, expressed at low levels in seedlings.

Its subcellular location is the nucleus. Functionally, may be required for replication-independent chromatin assembly. This Arabidopsis thaliana (Mouse-ear cress) protein is Calcineurin-binding protein 1.